The sequence spans 60 residues: Large ribosomal subunit protein uL30 (60 aa).

Belongs to the universal ribosomal protein uL30 family. In terms of assembly, part of the 50S ribosomal subunit.

This is Large ribosomal subunit protein uL30 from Azoarcus sp. (strain BH72).